Here is a 242-residue protein sequence, read N- to C-terminus: UDP-2,3-diacylglucosamine hydrolase (242 aa).

D8, H10, D41, N79, and H114 together coordinate Mn(2+). Residue 79–80 (NR) participates in substrate binding. Substrate contacts are provided by D122, K164, K167, and H195. The Mn(2+) site is built by H195 and H197.

It belongs to the LpxH family. Mn(2+) serves as cofactor.

The protein localises to the cell inner membrane. The enzyme catalyses UDP-2-N,3-O-bis[(3R)-3-hydroxytetradecanoyl]-alpha-D-glucosamine + H2O = 2-N,3-O-bis[(3R)-3-hydroxytetradecanoyl]-alpha-D-glucosaminyl 1-phosphate + UMP + 2 H(+). Its pathway is glycolipid biosynthesis; lipid IV(A) biosynthesis; lipid IV(A) from (3R)-3-hydroxytetradecanoyl-[acyl-carrier-protein] and UDP-N-acetyl-alpha-D-glucosamine: step 4/6. Hydrolyzes the pyrophosphate bond of UDP-2,3-diacylglucosamine to yield 2,3-diacylglucosamine 1-phosphate (lipid X) and UMP by catalyzing the attack of water at the alpha-P atom. Involved in the biosynthesis of lipid A, a phosphorylated glycolipid that anchors the lipopolysaccharide to the outer membrane of the cell. This is UDP-2,3-diacylglucosamine hydrolase from Vibrio parahaemolyticus serotype O3:K6 (strain RIMD 2210633).